The chain runs to 1552 residues: Nonribosomal peptide synthetase acrB (1552 aa).

Positions 129 to 564 (ASFAQERIWF…PVANLAIFDE (436 aa)) are condensation. The interval 594–999 (RHCKAHPRDV…RMEGSAQVKI (406 aa)) is adenylation. The 77-residue stretch at 1110 to 1186 (APLGVEEEVM…AMARLLQPQE (77 aa)) folds into the Carrier domain. Ser-1146 is subject to O-(pantetheine 4'-phosphoryl)serine. Residues 1226-1464 (LTGATGFLGR…DFVGVDAVAS (239 aa)) are thiolester reductase (R) domain.

Belongs to the NRP synthetase family.

It functions in the pathway secondary metabolite biosynthesis. Functionally, nonribosomal peptide synthetase; part of the cluster that mediates the biosynthesis of acurin A, a highly reduced polyketide coupled to a serine via a peptide bond. The activities of the highly reducing polyketide synthase acrA and the nonribosomal peptide synthetase acrB are collectively responsible for the synthesis of the acurin A core structure with a heptaketide backbone produced by acrA covalently fused to a L-serine by acrB. After the formation of the PK-NRP hybrid product, it is detached from acrB by reductive release to set up the formation of the lactam ring by aldol condensation. The hydrolyase acrC then catalyzes water loss to generate a double bond in the ring. This double bond is probably reduced, which is followed by three oxidations at C-22 to generate the carboxylic acid moiety, involving probably the FAD-binding monooxygenase acrE and the cytochrome P450 monooxygenases acrD and acrF. Finally, a last methylation step performed by the O-methyltransferase acrG leads to the production of acurin A. The protein is Nonribosomal peptide synthetase acrB of Aspergillus aculeatus (strain ATCC 16872 / CBS 172.66 / WB 5094).